The primary structure comprises 419 residues: uncharacterized protein (419 aa).

The next 13 membrane-spanning stretches (helical) occupy residues 5–25 (MIIV…ALII), 26–46 (AAGV…AQQI), 53–73 (FPML…GGEL), 102–122 (VFGG…SVLI), 144–164 (VIDV…VSGV), 170–190 (FVAG…VCWF), 210–230 (ATLA…ILFL), 234–254 (LATP…LSLL), 274–294 (ATGV…VLTF), 309–329 (ISSP…VGMP), 332–352 (MPPA…TIGL), 360–380 (MMVI…TLFI), and 396–416 (LWPF…IPAL).

It belongs to the YiaN/YgiK family.

The protein resides in the cell inner membrane. This is an uncharacterized protein from Sinorhizobium fredii (strain NBRC 101917 / NGR234).